The sequence spans 497 residues: Probable cytosol aminopeptidase (497 aa).

Mn(2+) contacts are provided by Lys263 and Asp268. Residue Lys275 is part of the active site. Mn(2+)-binding residues include Asp286, Asp345, and Glu347. Residue Arg349 is part of the active site.

Belongs to the peptidase M17 family. Requires Mn(2+) as cofactor.

Its subcellular location is the cytoplasm. It carries out the reaction Release of an N-terminal amino acid, Xaa-|-Yaa-, in which Xaa is preferably Leu, but may be other amino acids including Pro although not Arg or Lys, and Yaa may be Pro. Amino acid amides and methyl esters are also readily hydrolyzed, but rates on arylamides are exceedingly low.. The enzyme catalyses Release of an N-terminal amino acid, preferentially leucine, but not glutamic or aspartic acids.. In terms of biological role, presumably involved in the processing and regular turnover of intracellular proteins. Catalyzes the removal of unsubstituted N-terminal amino acids from various peptides. This is Probable cytosol aminopeptidase from Agrobacterium fabrum (strain C58 / ATCC 33970) (Agrobacterium tumefaciens (strain C58)).